Reading from the N-terminus, the 252-residue chain is O-methyltransferase hkm8 (252 aa).

S-adenosyl-L-methionine contacts are provided by residues E73, 75-76, S81, and D100; that span reads GT.

Belongs to the class I-like SAM-binding methyltransferase superfamily. Cation-dependent O-methyltransferase family.

The protein operates within secondary metabolite biosynthesis. Its function is as follows. O-methyltransferase; part of the gene cluster that mediates the biosynthesis of hancockiamides, an unusual new family of N-cinnamoylated piperazines. The NRPS hkm10 and the NmrA-like reductase hkm9 are proposed to convert two molecules of L-Phe to the intermediary piperazine called xenocockiamide A. Xenocockiamide A is then converted to hancockiamide D via a series of hydroxylations and O-methylations. The tyrosinase hkm6 may catalyze an aromatic hydroxylation, then the 2-oxoglutarate-dependent Fe(II) dioxygenase hkm4 and the FAD-dependent phenol hydroxylase hkm7 may catalyze consecutive hydroxylations to install 2 more hydroxy groups, and the methyltransferase hkm8 probably catalyzes two methylations using 2 molecules of S-adenosyl-L-methionine (SAM). The NRPS hkm11 activates and transfers trans-cinnamate supplied by the PAL hkm12 to hancockiamide D and produces hancockiamide A. NRPS Hkm11 has the flexibility to tolerate the bulky hancockiamide G as a substrate and the absence of the acetyl-transferase hkm3 opens up the opportunity for hkm11 to introduce a second N-cinnamoyl moiety. The cytochrome P450 monooxygenase hkm5 catalyzes the methylenedioxy bridge formation, converting hancockiamide A into hancockiamide G. Hkm5 can also convert hancockiamide B into hancockiamide C, and hancockiamide D into hancockiamide H. The N-acetyltransferase hkm3 finally transfers an acetyl group to 1-N of piperazine, converting hancockiamide A into hancockiamide B and hancockiamide G into hancockiamide C. This Aspergillus hancockii protein is O-methyltransferase hkm8.